Reading from the N-terminus, the 68-residue chain is Putative membrane protein insertion efficiency factor (68 aa).

Belongs to the UPF0161 family.

The protein localises to the cell membrane. Could be involved in insertion of integral membrane proteins into the membrane. This chain is Putative membrane protein insertion efficiency factor, found in Herpetosiphon aurantiacus (strain ATCC 23779 / DSM 785 / 114-95).